The sequence spans 815 residues: Protein-glutamine gamma-glutamyltransferase K (815 aa).

Disordered regions lie at residues 1–40 (MDGP…RRGG) and 59–100 (DDWG…AAGD). Residues 16 to 25 (WQPPTTPSPE) are compositionally biased toward pro residues. T21 is subject to Phosphothreonine. S23, S80, S83, S90, and S93 each carry phosphoserine. Over residues 59–87 (DDWGPEPHRDRGSGSGRRRPDSRGSDSRR) the composition is skewed to basic and acidic residues. Catalysis depends on residues C375, H434, and D457. Ca(2+)-binding residues include N497, D499, E546, and E551. A disordered region spans residues 795 to 815 (SNAGGNSPLGETIPMASRGGA).

Belongs to the transglutaminase superfamily. Transglutaminase family. Interacts with PLAAT4. Ca(2+) serves as cofactor. Post-translationally, palmitoylated. The membrane anchorage region possesses a cluster of five cysteines within which fatty acid(s) may become thioester-linked. It is subject to phorbol ester-stimulated phosphorylation and is hypersensitive to proteolysis, which releases the enzyme in a soluble form. In terms of processing, tyrosine-phosphorylated.

It localises to the membrane. It carries out the reaction L-glutaminyl-[protein] + L-lysyl-[protein] = [protein]-L-lysyl-N(6)-5-L-glutamyl-[protein] + NH4(+). Its function is as follows. Catalyzes the cross-linking of proteins and the conjugation of polyamines to proteins. Responsible for cross-linking epidermal proteins during formation of the stratum corneum. Involved in cell proliferation. The sequence is that of Protein-glutamine gamma-glutamyltransferase K (TGM1) from Canis lupus familiaris (Dog).